The chain runs to 249 residues: 1-(5-phosphoribosyl)-5-[(5-phosphoribosylamino)methylideneamino] imidazole-4-carboxamide isomerase (249 aa).

Residue Asp-8 is the Proton acceptor of the active site. Asp-130 (proton donor) is an active-site residue.

Belongs to the HisA/HisF family.

It is found in the cytoplasm. The enzyme catalyses 1-(5-phospho-beta-D-ribosyl)-5-[(5-phospho-beta-D-ribosylamino)methylideneamino]imidazole-4-carboxamide = 5-[(5-phospho-1-deoxy-D-ribulos-1-ylimino)methylamino]-1-(5-phospho-beta-D-ribosyl)imidazole-4-carboxamide. Its pathway is amino-acid biosynthesis; L-histidine biosynthesis; L-histidine from 5-phospho-alpha-D-ribose 1-diphosphate: step 4/9. This chain is 1-(5-phosphoribosyl)-5-[(5-phosphoribosylamino)methylideneamino] imidazole-4-carboxamide isomerase, found in Nitrosococcus oceani (strain ATCC 19707 / BCRC 17464 / JCM 30415 / NCIMB 11848 / C-107).